We begin with the raw amino-acid sequence, 416 residues long: Counting factor 60 (416 aa).

The signal sequence occupies residues 1 to 22; the sequence is MIKKSALITLFLVSLILGVSLS. N-linked (GlcNAc...) asparagine glycosylation is found at asparagine 110, asparagine 218, asparagine 231, asparagine 318, and asparagine 411.

The protein belongs to the histidine acid phosphatase family. In terms of assembly, component of the counting factor (CF) complex, which includes cf60, cf50, cf45-1 and ctnA.

The protein localises to the secreted. Cell-counting factor that limits the maximum size of the multicellular structure. Does not possess acid phosphatase activity. Cells with decreased levels of this protein form large groups while cells overexpressing this protein form small groups. This chain is Counting factor 60 (cf60), found in Dictyostelium discoideum (Social amoeba).